A 289-amino-acid chain; its full sequence is MSEDRRSPTDEAPREGELPRSPGDNFRIALPNFEGPLDLLLHLIKEHRVDIFDIPLALITEKYLEHLERMREINLDIAGEFLVMASTLAHLKSRMLLPRQDVASAQEGAEVLAVAEETEDPRAELVRRLLEYQKYKDAAEQLATQDLLGRDVFARNVPVEAVPIPEEEVGLQEFSVLKLVEALDRVLERLQPKLQHEVVRERVTLSEAILRVVERLRPHGQVLFESLFTEEETPSRQEVVITFLAILEMVKRRLIRVVQDEPLGPILLLPNGDALEKLAPTEVDDSDYR.

Positions 1–18 (MSEDRRSPTDEAPREGEL) are enriched in basic and acidic residues. Residues 1-24 (MSEDRRSPTDEAPREGELPRSPGD) form a disordered region.

Belongs to the ScpA family. As to quaternary structure, component of the Structural Maintenance of Chromosome (SMC) condensin-like complex composed of ScpA, ScpB and the Smc homodimer. ScpA and ScpB bind to the head domain of Smc. The presence of the three proteins is required for the association of the complex with DNA.

It is found in the cytoplasm. In terms of biological role, a conditionally essential component of the chromosome segregation machinery. Participates in chromosomal partition during cell division. Important for positioning of ParB-parS complexes (ori of replication) and of the ter replication site, as well as for segration of the ParB-parS complex and thus chromosome segregation. May act via the formation of a condensin-like complex containing Smc, ScpA and ScpB that pulls DNA away from mid-cell into both cell halves. The polypeptide is Segregation and condensation protein A (Myxococcus xanthus (strain DK1622)).